The primary structure comprises 252 residues: Small ribosomal subunit protein uS2 (252 aa).

It belongs to the universal ribosomal protein uS2 family. In terms of assembly, component of the small ribosomal subunit. Mature ribosomes consist of a small (40S) and a large (60S) subunit. The 40S subunit contains about 33 different proteins and 1 molecule of RNA (18S). The 60S subunit contains about 49 different proteins and 3 molecules of RNA (25S, 5.8S and 5S). Interacts with RPS21.

It is found in the cytoplasm. Functionally, required for the assembly and/or stability of the 40S ribosomal subunit. Required for the processing of the 20S rRNA-precursor to mature 18S rRNA in a late step of the maturation of 40S ribosomal subunits. The sequence is that of Small ribosomal subunit protein uS2 from Encephalitozoon cuniculi (strain GB-M1) (Microsporidian parasite).